The following is a 189-amino-acid chain: Movement protein (189 aa).

This sequence belongs to the tombusvirus/aureusvirus movement protein p22 family.

Its subcellular location is the host membrane. In terms of biological role, transports viral genome to neighboring plant cells directly through plasmosdesmata, without any budding. The movement protein allows efficient cell to cell propagation, by bypassing the host cell wall barrier. This is Movement protein from Cymbidium ringspot virus (CymRSV).